The sequence spans 127 residues: Fluoride-specific ion channel FluC (127 aa).

The next 4 helical transmembrane spans lie at 4–24, 34–54, 65–85, and 97–117; these read IIYI…TQIA, FPFP…IGFF, FELR…FSTL, and FYGI…LAVL. Na(+)-binding residues include Gly-77 and Thr-80.

It belongs to the fluoride channel Fluc/FEX (TC 1.A.43) family.

The protein resides in the cell inner membrane. It catalyses the reaction fluoride(in) = fluoride(out). Na(+) is not transported, but it plays an essential structural role and its presence is essential for fluoride channel function. Functionally, fluoride-specific ion channel. Important for reducing fluoride concentration in the cell, thus reducing its toxicity. This Bacteroides fragilis (strain ATCC 25285 / DSM 2151 / CCUG 4856 / JCM 11019 / LMG 10263 / NCTC 9343 / Onslow / VPI 2553 / EN-2) protein is Fluoride-specific ion channel FluC.